A 286-amino-acid polypeptide reads, in one-letter code: ATP synthase gamma chain (286 aa).

This sequence belongs to the ATPase gamma chain family. F-type ATPases have 2 components, CF(1) - the catalytic core - and CF(0) - the membrane proton channel. CF(1) has five subunits: alpha(3), beta(3), gamma(1), delta(1), epsilon(1). CF(0) has three main subunits: a, b and c.

It is found in the cell membrane. Functionally, produces ATP from ADP in the presence of a proton gradient across the membrane. The gamma chain is believed to be important in regulating ATPase activity and the flow of protons through the CF(0) complex. This chain is ATP synthase gamma chain, found in Bacillus mycoides (strain KBAB4) (Bacillus weihenstephanensis).